The sequence spans 253 residues: MICOS complex subunit mic25 (253 aa).

The segment at 1–89 is disordered; that stretch reads MGGSESTGRK…GAHKPTAAGV (89 aa). The N-myristoyl glycine moiety is linked to residue G2. A compositionally biased stretch (basic and acidic residues) spans 28-44; the sequence is RLSDEVVNRMKDSDLPS. Low complexity predominate over residues 48–64; the sequence is STSAASGTASAPAAFPS. Residues 94–178 adopt a coiled-coil conformation; that stretch reads AEEDLYRRYE…EQLSSIEKKN (85 aa). Residues 206-248 form the CHCH domain; that stretch reads DPVCMNLQADILKCYSENKQERLNCSNLAKEYRKCVSAAQKNL. Short sequence motifs (cx9C motif) lie at residues 209 to 219 and 230 to 240; these read CMNLQADILKC and CSNLAKEYRKC. Disulfide bonds link C209–C240 and C219–C230.

The protein belongs to the MICOS complex subunit Mic19 family. Metazoan Mic25 subfamily. As to quaternary structure, component of the mitochondrial contact site and cristae organizing system (MICOS) complex (also known as MINOS or MitOS complex).

It localises to the mitochondrion inner membrane. Its function is as follows. Component of the MICOS complex, a large protein complex of the mitochondrial inner membrane that plays crucial roles in the maintenance of crista junctions, inner membrane architecture, and formation of contact sites to the outer membrane. The protein is MICOS complex subunit mic25 (chchd6) of Xenopus tropicalis (Western clawed frog).